The following is a 468-amino-acid chain: ATP synthase subunit beta (468 aa).

148-155 (GGAGVGKT) is an ATP binding site.

This sequence belongs to the ATPase alpha/beta chains family. F-type ATPases have 2 components, CF(1) - the catalytic core - and CF(0) - the membrane proton channel. CF(1) has five subunits: alpha(3), beta(3), gamma(1), delta(1), epsilon(1). CF(0) has three main subunits: a(1), b(2) and c(9-12). The alpha and beta chains form an alternating ring which encloses part of the gamma chain. CF(1) is attached to CF(0) by a central stalk formed by the gamma and epsilon chains, while a peripheral stalk is formed by the delta and b chains.

It localises to the cell inner membrane. The enzyme catalyses ATP + H2O + 4 H(+)(in) = ADP + phosphate + 5 H(+)(out). Produces ATP from ADP in the presence of a proton gradient across the membrane. The catalytic sites are hosted primarily by the beta subunits. In Xanthomonas campestris pv. campestris (strain 8004), this protein is ATP synthase subunit beta.